Reading from the N-terminus, the 330-residue chain is Ketol-acid reductoisomerase (NADP(+)) (330 aa).

The region spanning 1-181 (MNVYYEQDAD…GGAKAGVIET (181 aa)) is the KARI N-terminal Rossmann domain. NADP(+) contacts are provided by residues 24–27 (YGSQ), arginine 47, serine 50, serine 52, and 82–85 (DQYQ). Histidine 107 is an active-site residue. Glycine 133 is an NADP(+) binding site. Residues 182–327 (TIKDETETDL…AKLRNMMSWL (146 aa)) enclose the KARI C-terminal knotted domain. Mg(2+) is bound by residues aspartate 190, glutamate 194, glutamate 226, and glutamate 230. Serine 251 lines the substrate pocket.

This sequence belongs to the ketol-acid reductoisomerase family. The cofactor is Mg(2+).

It carries out the reaction (2R)-2,3-dihydroxy-3-methylbutanoate + NADP(+) = (2S)-2-acetolactate + NADPH + H(+). The catalysed reaction is (2R,3R)-2,3-dihydroxy-3-methylpentanoate + NADP(+) = (S)-2-ethyl-2-hydroxy-3-oxobutanoate + NADPH + H(+). It participates in amino-acid biosynthesis; L-isoleucine biosynthesis; L-isoleucine from 2-oxobutanoate: step 2/4. Its pathway is amino-acid biosynthesis; L-valine biosynthesis; L-valine from pyruvate: step 2/4. In terms of biological role, involved in the biosynthesis of branched-chain amino acids (BCAA). Catalyzes an alkyl-migration followed by a ketol-acid reduction of (S)-2-acetolactate (S2AL) to yield (R)-2,3-dihydroxy-isovalerate. In the isomerase reaction, S2AL is rearranged via a Mg-dependent methyl migration to produce 3-hydroxy-3-methyl-2-ketobutyrate (HMKB). In the reductase reaction, this 2-ketoacid undergoes a metal-dependent reduction by NADPH to yield (R)-2,3-dihydroxy-isovalerate. The protein is Ketol-acid reductoisomerase (NADP(+)) of Prosthecochloris aestuarii (strain DSM 271 / SK 413).